A 134-amino-acid chain; its full sequence is Glycine cleavage system H protein (134 aa).

Positions 24 to 106 (TVRVGITDYA…YGAGWLLDIQ (83 aa)) constitute a Lipoyl-binding domain. Lys65 carries the post-translational modification N6-lipoyllysine.

This sequence belongs to the GcvH family. As to quaternary structure, the glycine cleavage system is composed of four proteins: P, T, L and H. (R)-lipoate serves as cofactor.

In terms of biological role, the glycine cleavage system catalyzes the degradation of glycine. The H protein shuttles the methylamine group of glycine from the P protein to the T protein. The sequence is that of Glycine cleavage system H protein from Mycobacterium tuberculosis (strain ATCC 25177 / H37Ra).